We begin with the raw amino-acid sequence, 612 residues long: Adherence factor (612 aa).

6 stretches are compositionally biased toward low complexity: residues 1–18, 47–68, 94–106, 115–141, 182–203, and 218–228; these read MSSFNSNSNPANAQNLSS, SSMMQQSQQGQPQSQTSQQQQQ, LQTQQPSSSSATT, YNQQQSQQQQQQQQQYQQMQPQPNNMQ, QSAQPISHSQPQPQPQATQPRS, and SRQVSGSGRST. Disordered regions lie at residues 1–20, 46–68, 94–143, 179–273, 443–480, 497–527, and 546–612; these read MSSFNSNSNPANAQNLSSFQ, ASSMMQQSQQGQPQSQTSQQQQQ, LQTQ…MQFF, PQLQ…NNNK, KEKKLTEKTIEQREQQRKKRASANHSPPDSDSITNTNN, SQLMPNQNTGSGATKISSTTPPPPSQALSNN, and SQEQ…KQFY. Polar residues predominate over residues 230-240; that stretch reads AKKQSAITSGS. Residues 254-272 show a composition bias toward low complexity; the sequence is TSVANSTSTTTMTTTNNNN. Over residues 443–457 the composition is skewed to basic and acidic residues; it reads KEKKLTEKTIEQREQ. Polar residues-rich tracts occupy residues 465–480 and 497–512; these read ANHSPPDSDSITNTNN and SQLMPNQNTGSGATKI. Residues 555 to 571 show a composition bias toward basic residues; the sequence is NQHHHNHQQHPLIHHHQ. The segment covering 585-606 has biased composition (low complexity); the sequence is PSTIPTSSLSIQQQQQQQQQQL.

Surface antigen mediating adhesion and aggregation in S.cerevisiae. The sequence is that of Adherence factor (ADF1) from Candida albicans (strain SC5314 / ATCC MYA-2876) (Yeast).